The chain runs to 277 residues: Histone-lysine N-methyltransferase set-17 (277 aa).

Positions 135-246 constitute an SET domain; it reads FRIEESKLPN…INQELLVWYG (112 aa). Tyrosine 245 is an S-adenosyl-L-methionine binding site.

It belongs to the class V-like SAM-binding methyltransferase superfamily. As to expression, expressed in the germline. Predominantly expressed in primary spermatocytes. Also expressed in the oocyte-producing germline of hermaphrodites.

It localises to the nucleus. It carries out the reaction N(6)-methyl-L-lysyl(4)-[histone H3] + S-adenosyl-L-methionine = N(6),N(6)-dimethyl-L-lysyl(4)-[histone H3] + S-adenosyl-L-homocysteine + H(+). It catalyses the reaction L-lysyl(4)-[histone H3] + S-adenosyl-L-methionine = N(6)-methyl-L-lysyl(4)-[histone H3] + S-adenosyl-L-homocysteine + H(+). Its function is as follows. Histone methyltransferase that specifically mono- and di-methylates 'Lys-4' of histone H3 in vitro. Does not tri-methylate 'Lys-4' of histone H3 in vitro. Promotes spermatid development and fertility by positively regulating the transcription of spermatocyte-specific genes in primary spermatocytes. Together with spr-5, required for transgenerational fertility. The chain is Histone-lysine N-methyltransferase set-17 from Caenorhabditis elegans.